The chain runs to 271 residues: Meiotic drive suppressor wtf35 (271 aa).

2 disordered regions span residues 1–24 and 54–75; these read MKNN…DHEI and TVPE…ERRQ. Polar residues predominate over residues 57–69; sequence EDSSTGPTETANP. 4 helical membrane passes run 90–110, 120–140, 176–196, and 213–233; these read LLIS…CVNP, AFSV…FCFF, WENM…VGSP, and SLAE…AETV.

It belongs to the WTF family. In terms of assembly, homomer. Interacts with other proteins that exhibit high sequence similarity.

Its subcellular location is the spore membrane. It is found in the vacuole membrane. In terms of biological role, acts as a suppressor component of the dual wtf meiotic drive system, and can suppress but not confer meiotic drive by compatible poisons. Wtf meiotic drive systems promote unequal transmission of alleles from the parental zygote to progeny spores by encoding a poison and an antidote from the same locus; the poison is trans-acting and forms toxic aggregates in all spores within an ascus, wherease the antidote is spore-specific and targets aggregates for degradation by the vacuole. Meiotic drive by wtf systems therefore lead to poisoning of all progeny that do not inherit the dual poison/antidote allele, or express a compatible antidote. This is Meiotic drive suppressor wtf35 from Schizosaccharomyces kambucha (Fission yeast).